The chain runs to 38 residues: L-amino-acid oxidase (38 aa).

This sequence belongs to the flavin monoamine oxidase family. FIG1 subfamily. In terms of assembly, homodimer; non-covalently linked. The cofactor is FAD. N-glycosylated. In terms of tissue distribution, expressed by the venom gland.

The protein localises to the secreted. The catalysed reaction is an L-alpha-amino acid + O2 + H2O = a 2-oxocarboxylate + H2O2 + NH4(+). It carries out the reaction L-leucine + O2 + H2O = 4-methyl-2-oxopentanoate + H2O2 + NH4(+). The enzyme catalyses L-phenylalanine + O2 + H2O = 3-phenylpyruvate + H2O2 + NH4(+). It catalyses the reaction L-tryptophan + O2 + H2O = indole-3-pyruvate + H2O2 + NH4(+). The catalysed reaction is L-methionine + O2 + H2O = 4-methylsulfanyl-2-oxobutanoate + H2O2 + NH4(+). It carries out the reaction L-arginine + O2 + H2O = 5-guanidino-2-oxopentanoate + H2O2 + NH4(+). The enzyme catalyses L-2-aminohexanoate + O2 + H2O = 2-oxohexanoate + H2O2 + NH4(+). It catalyses the reaction L-2-aminopentanoate + O2 + H2O = 2-oxopentanoate + H2O2 + NH4(+). The catalysed reaction is L-tyrosine + O2 + H2O = 3-(4-hydroxyphenyl)pyruvate + H2O2 + NH4(+). In terms of biological role, catalyzes an oxidative deamination of predominantly hydrophobic and aromatic L-amino acids, thus producing hydrogen peroxide that may contribute to the diverse toxic effects of this enzyme. Is very active against L-Phe and L-Tyr, moderately active against L-Trp, L-Met, L-Leu, L-norleucine (L-2-aminohexanoate), L-Arg and L-norvaline (L-2-aminopentanoate), and slightly active against L-His, L-cystine, and L-Ile. L-Gln, L-Lys, L-Asn, L-ornithine, L-Ala and L-Val are oxidized very slowly. Exhibits diverse biological activities, such as hemorrhage, hemolysis, edema, apoptosis of vascular endothelial cells or tumor cell lines, antibacterial and antiparasitic activities. This protein inhibits both agonist- and shear stress-induced platelet aggregation (SIPA). Effects of snake L-amino oxidases on platelets are controversial, since they either induce aggregation or inhibit agonist-induced aggregation. These different effects are probably due to different experimental conditions. In Naja kaouthia (Monocled cobra), this protein is L-amino-acid oxidase.